The primary structure comprises 245 residues: DNA polymerase sliding clamp (245 aa).

Belongs to the PCNA family. Homotrimer. The subunits circularize to form a toroid; DNA passes through its center. Replication factor C (RFC) is required to load the toroid on the DNA.

Sliding clamp subunit that acts as a moving platform for DNA processing. Responsible for tethering the catalytic subunit of DNA polymerase and other proteins to DNA during high-speed replication. The chain is DNA polymerase sliding clamp from Archaeoglobus fulgidus (strain ATCC 49558 / DSM 4304 / JCM 9628 / NBRC 100126 / VC-16).